The following is a 253-amino-acid chain: DNA repair protein RecO (253 aa).

Belongs to the RecO family.

Its function is as follows. Involved in DNA repair and RecF pathway recombination. In Dehalococcoides mccartyi (strain ATCC BAA-2266 / KCTC 15142 / 195) (Dehalococcoides ethenogenes (strain 195)), this protein is DNA repair protein RecO.